The following is a 1404-amino-acid chain: DNA-directed RNA polymerase subunit beta' (1404 aa).

The Zn(2+) site is built by Cys70, Cys72, Cys85, and Cys88. Asp460, Asp462, and Asp464 together coordinate Mg(2+). Cys814, Cys888, Cys895, and Cys898 together coordinate Zn(2+).

It belongs to the RNA polymerase beta' chain family. As to quaternary structure, the RNAP catalytic core consists of 2 alpha, 1 beta, 1 beta' and 1 omega subunit. When a sigma factor is associated with the core the holoenzyme is formed, which can initiate transcription. The cofactor is Mg(2+). Requires Zn(2+) as cofactor.

It catalyses the reaction RNA(n) + a ribonucleoside 5'-triphosphate = RNA(n+1) + diphosphate. In terms of biological role, DNA-dependent RNA polymerase catalyzes the transcription of DNA into RNA using the four ribonucleoside triphosphates as substrates. In Shewanella amazonensis (strain ATCC BAA-1098 / SB2B), this protein is DNA-directed RNA polymerase subunit beta'.